The sequence spans 139 residues: D-ribose pyranase (139 aa).

The active-site Proton donor is histidine 20. Substrate is bound by residues aspartate 28, histidine 106, and tyrosine 128–asparagine 130.

This sequence belongs to the RbsD / FucU family. RbsD subfamily. In terms of assembly, homodecamer.

Its subcellular location is the cytoplasm. It carries out the reaction beta-D-ribopyranose = beta-D-ribofuranose. It participates in carbohydrate metabolism; D-ribose degradation; D-ribose 5-phosphate from beta-D-ribopyranose: step 1/2. Catalyzes the interconversion of beta-pyran and beta-furan forms of D-ribose. The chain is D-ribose pyranase from Pectobacterium atrosepticum (strain SCRI 1043 / ATCC BAA-672) (Erwinia carotovora subsp. atroseptica).